The chain runs to 383 residues: UDP-N-acetylglucosamine--N-acetylmuramyl-(pentapeptide) pyrophosphoryl-undecaprenol N-acetylglucosamine transferase (383 aa).

UDP-N-acetyl-alpha-D-glucosamine contacts are provided by residues 10 to 12, asparagine 124, arginine 165, serine 190, isoleucine 245, and glutamine 290; that span reads TGG. The tract at residues 364 to 383 is disordered; it reads PFGQAREPGQKPARPPDLAS.

This sequence belongs to the glycosyltransferase 28 family. MurG subfamily.

Its subcellular location is the cell inner membrane. The enzyme catalyses di-trans,octa-cis-undecaprenyl diphospho-N-acetyl-alpha-D-muramoyl-L-alanyl-D-glutamyl-meso-2,6-diaminopimeloyl-D-alanyl-D-alanine + UDP-N-acetyl-alpha-D-glucosamine = di-trans,octa-cis-undecaprenyl diphospho-[N-acetyl-alpha-D-glucosaminyl-(1-&gt;4)]-N-acetyl-alpha-D-muramoyl-L-alanyl-D-glutamyl-meso-2,6-diaminopimeloyl-D-alanyl-D-alanine + UDP + H(+). It functions in the pathway cell wall biogenesis; peptidoglycan biosynthesis. Its function is as follows. Cell wall formation. Catalyzes the transfer of a GlcNAc subunit on undecaprenyl-pyrophosphoryl-MurNAc-pentapeptide (lipid intermediate I) to form undecaprenyl-pyrophosphoryl-MurNAc-(pentapeptide)GlcNAc (lipid intermediate II). In Anaeromyxobacter sp. (strain K), this protein is UDP-N-acetylglucosamine--N-acetylmuramyl-(pentapeptide) pyrophosphoryl-undecaprenol N-acetylglucosamine transferase.